The chain runs to 284 residues: Protein SIC1 (284 aa).

The disordered stretch occupies residues 1-89 (MTPSTPPRSR…SPFPKSSVKR (89 aa)). The residue at position 5 (Thr5) is a Phosphothreonine; by PHO85. Composition is skewed to polar residues over residues 18 to 52 (PSGN…TKSF) and 61 to 79 (PNSN…SPQR). Phosphothreonine is present on Thr33. Phosphoserine is present on Ser76. Thr173 bears the Phosphothreonine mark. A phosphoserine mark is found at Ser198 and Ser201. Lysine derivative occurs at positions 268, 272, and 274.

As to quaternary structure, interacts with HOG1. Post-translationally, phosphorylated by cyclin-dependent kinases CDC28 and PHO85 in association with G1-cyclins, promoting degradation of SIC1 and exit form G1. In terms of processing, may contain a covalently attached chromophore. The N-terminus is blocked.

The protein resides in the cytoplasm. It localises to the nucleus. Its function is as follows. Substrate and inhibitor of the cyclin-dependent protein kinase CDC28. Its activity could be important for faithful segregation of chromosomes to daughter cells. It acts in response to a signal from a post-start checkpoint. The polypeptide is Protein SIC1 (SIC1) (Saccharomyces cerevisiae (strain ATCC 204508 / S288c) (Baker's yeast)).